Here is a 168-residue protein sequence, read N- to C-terminus: ATP synthase subunit b (168 aa).

A helical transmembrane segment spans residues 10-30 (LYLGDMLFYLVSFLIMAALVW). The tract at residues 61-80 (EAQKLAAKRQEELKGSRQEA) is disordered.

This sequence belongs to the ATPase B chain family. As to quaternary structure, F-type ATPases have 2 components, F(1) - the catalytic core - and F(0) - the membrane proton channel. F(1) has five subunits: alpha(3), beta(3), gamma(1), delta(1), epsilon(1). F(0) has three main subunits: a(1), b(2) and c(10-14). The alpha and beta chains form an alternating ring which encloses part of the gamma chain. F(1) is attached to F(0) by a central stalk formed by the gamma and epsilon chains, while a peripheral stalk is formed by the delta and b chains.

It localises to the cell membrane. F(1)F(0) ATP synthase produces ATP from ADP in the presence of a proton or sodium gradient. F-type ATPases consist of two structural domains, F(1) containing the extramembraneous catalytic core and F(0) containing the membrane proton channel, linked together by a central stalk and a peripheral stalk. During catalysis, ATP synthesis in the catalytic domain of F(1) is coupled via a rotary mechanism of the central stalk subunits to proton translocation. Functionally, component of the F(0) channel, it forms part of the peripheral stalk, linking F(1) to F(0). The polypeptide is ATP synthase subunit b (Limosilactobacillus fermentum (strain NBRC 3956 / LMG 18251) (Lactobacillus fermentum)).